The following is a 158-amino-acid chain: Succinate dehydrogenase assembly factor 2, mitochondrial (158 aa).

The transit peptide at 1 to 23 directs the protein to the mitochondrion; that stretch reads MLRQLLATARRLLLPLATPKRCL.

It belongs to the SDHAF2 family. Interacts with the flavoprotein subunit within the SDH catalytic dimer.

It is found in the mitochondrion matrix. Plays an essential role in the assembly of succinate dehydrogenase (SDH), an enzyme complex (also referred to as respiratory complex II) that is a component of both the tricarboxylic acid (TCA) cycle and the mitochondrial electron transport chain, and which couples the oxidation of succinate to fumarate with the reduction of ubiquinone (coenzyme Q) to ubiquinol. Required for flavinylation (covalent attachment of FAD) of the flavoprotein subunit of the SDH catalytic dimer. The polypeptide is Succinate dehydrogenase assembly factor 2, mitochondrial (Drosophila virilis (Fruit fly)).